Consider the following 331-residue polypeptide: Ferredoxin--NADP reductase (331 aa).

7 residues coordinate FAD: Glu34, Gln42, Tyr47, Val87, Phe121, Asp285, and Thr325.

Belongs to the ferredoxin--NADP reductase type 2 family. In terms of assembly, homodimer. It depends on FAD as a cofactor.

It carries out the reaction 2 reduced [2Fe-2S]-[ferredoxin] + NADP(+) + H(+) = 2 oxidized [2Fe-2S]-[ferredoxin] + NADPH. This is Ferredoxin--NADP reductase from Lactiplantibacillus plantarum (strain ATCC BAA-793 / NCIMB 8826 / WCFS1) (Lactobacillus plantarum).